The sequence spans 180 residues: Ribosome maturation factor RimM (180 aa).

The region spanning 104-177 (PEEFHDHQLV…RVVVDPPGGL (74 aa)) is the PRC barrel domain.

Belongs to the RimM family. As to quaternary structure, binds ribosomal protein uS19.

It localises to the cytoplasm. An accessory protein needed during the final step in the assembly of 30S ribosomal subunit, possibly for assembly of the head region. Essential for efficient processing of 16S rRNA. May be needed both before and after RbfA during the maturation of 16S rRNA. It has affinity for free ribosomal 30S subunits but not for 70S ribosomes. The protein is Ribosome maturation factor RimM of Salinispora tropica (strain ATCC BAA-916 / DSM 44818 / JCM 13857 / NBRC 105044 / CNB-440).